Here is a 297-residue protein sequence, read N- to C-terminus: Nucleotide-binding protein Bxeno_A0336 (297 aa).

8-15 (GISGSGKS) is an ATP binding site. 57–60 (DARS) is a GTP binding site.

Belongs to the RapZ-like family.

Functionally, displays ATPase and GTPase activities. The chain is Nucleotide-binding protein Bxeno_A0336 from Paraburkholderia xenovorans (strain LB400).